The chain runs to 206 residues: Small ribosomal subunit protein uS4 (206 aa).

Positions 96-156 (RRLDNVVYRM…EKSKNQLRIK (61 aa)) constitute an S4 RNA-binding domain.

Belongs to the universal ribosomal protein uS4 family. Part of the 30S ribosomal subunit. Contacts protein S5. The interaction surface between S4 and S5 is involved in control of translational fidelity.

In terms of biological role, one of the primary rRNA binding proteins, it binds directly to 16S rRNA where it nucleates assembly of the body of the 30S subunit. With S5 and S12 plays an important role in translational accuracy. This chain is Small ribosomal subunit protein uS4, found in Hahella chejuensis (strain KCTC 2396).